We begin with the raw amino-acid sequence, 531 residues long: uncharacterized protein (531 aa).

The first 28 residues, 1 to 28 (MNTKGIIAKLTAGALIANLLICPANTLA), serve as a signal peptide directing secretion. SLH domains follow at residues 29–85 (EKKT…QINK), 86–149 (QAKP…IGDL), and 150–210 (PTQF…SKRM). Residues 335-517 (IIIDPGHGGI…AAEAIYAGIL (183 aa)) enclose the MurNAc-LAA domain.

In the C-terminal section; belongs to the N-acetylmuramoyl-L-alanine amidase 3 family.

The protein localises to the secreted. It is found in the cell wall. Its subcellular location is the S-layer. This is an uncharacterized protein from Bacillus anthracis.